The chain runs to 1034 residues: Condensin complex subunit 3 (1034 aa).

HEAT repeat units follow at residues 95-132 (SPVN…NLPE), 139-176 (DLFD…PSDP), 178-213 (CPVS…SLPK), 242-279 (LTIA…QYSE), 281-317 (DVLD…LVQN), 439-476 (TSLI…PIVT), and 618-655 (DFAR…LFGM). Positions 663-672 (TNPDDSQCKA) are enriched in polar residues. The segment at 663–693 (TNPDDSQCKAQENADEDISEQEKPGSVDENL) is disordered. HEAT repeat units follow at residues 703 to 740 (ATVN…SGRL), 785 to 823 (CFAE…DLTR), and 878 to 915 (ENST…SGRE). A compositionally biased stretch (basic and acidic residues) spans 909-949 (QLRSGREEHRVSKETEPQVSKETEDRTNLQENEEGKQKDEA). The interval 909-1034 (QLRSGREEHR…LSKLLNEEAN (126 aa)) is disordered. Residues 964–984 (RGKATKGRRKGPAAAATRRKA) show a composition bias toward basic residues. The span at 985–999 (SKAEEAEAEMERQEE) shows a compositional bias: basic and acidic residues.

The protein belongs to the CND3 (condensin subunit 3) family. Component of the condensin complex, which contains the XCAP-E/SMC2 and XCAP-C/SMC4 heterodimer, and three non SMC subunits that probably regulate the complex: XCAP-H/NCAPH, XCAP-D2/NCAPD2 and XCAP-G/NCAPG. In terms of processing, phosphorylated by cdk1. Its phosphorylation, as well as that of XCAP-D2 and XCAP-H subunits, activates the condensin complex and is required for chromosome condensation.

It is found in the nucleus. It localises to the cytoplasm. The protein localises to the chromosome. In terms of biological role, regulatory subunit of the condensin complex, a complex required for conversion of interphase chromatin into mitotic-like condense chromosomes. The condensin complex probably introduces positive supercoils into relaxed DNA in the presence of type I topoisomerases and converts nicked DNA into positive knotted forms in the presence of type II topoisomerase. The polypeptide is Condensin complex subunit 3 (ncapg) (Xenopus laevis (African clawed frog)).